The sequence spans 876 residues: Alanine--tRNA ligase (876 aa).

Zn(2+) is bound by residues histidine 560, histidine 564, cysteine 662, and histidine 666.

It belongs to the class-II aminoacyl-tRNA synthetase family. It depends on Zn(2+) as a cofactor.

The protein resides in the cytoplasm. It catalyses the reaction tRNA(Ala) + L-alanine + ATP = L-alanyl-tRNA(Ala) + AMP + diphosphate. Functionally, catalyzes the attachment of alanine to tRNA(Ala) in a two-step reaction: alanine is first activated by ATP to form Ala-AMP and then transferred to the acceptor end of tRNA(Ala). Also edits incorrectly charged Ser-tRNA(Ala) and Gly-tRNA(Ala) via its editing domain. In Synechococcus sp. (strain ATCC 27144 / PCC 6301 / SAUG 1402/1) (Anacystis nidulans), this protein is Alanine--tRNA ligase.